A 67-amino-acid polypeptide reads, in one-letter code: Small ribosomal subunit protein eS17 (67 aa).

This sequence belongs to the eukaryotic ribosomal protein eS17 family.

This Thermococcus onnurineus (strain NA1) protein is Small ribosomal subunit protein eS17.